The primary structure comprises 149 residues: Ribosomal RNA large subunit methyltransferase H (149 aa).

Residues Leu-71, Gly-98, and Leu-117 to Leu-122 each bind S-adenosyl-L-methionine.

Belongs to the RNA methyltransferase RlmH family. Homodimer.

The protein localises to the cytoplasm. The enzyme catalyses pseudouridine(1915) in 23S rRNA + S-adenosyl-L-methionine = N(3)-methylpseudouridine(1915) in 23S rRNA + S-adenosyl-L-homocysteine + H(+). In terms of biological role, specifically methylates the pseudouridine at position 1915 (m3Psi1915) in 23S rRNA. The protein is Ribosomal RNA large subunit methyltransferase H of Campylobacter fetus subsp. fetus (strain 82-40).